The primary structure comprises 186 residues: MGLDKVVKDIMDKAEADSRDITAKAAAEAAEIKKSAEAEAKQIIAAENARAEQAISKMRQRELSSAKLDVKKAKLNSEKDVLAETHEAFVRQLSTLPREKKADLLQKLVKLAKKDIPQGKIFTNAADADLVKDSGYEYGGNVKCIGGIVVTSVDGSVNLDYTFDSILEDVWTSSMKPVSDILFGSR.

It belongs to the V-ATPase E subunit family. In terms of assembly, has multiple subunits with at least A(3), B(3), C, D, E, F, H, I and proteolipid K(x).

Its subcellular location is the cell membrane. Functionally, component of the A-type ATP synthase that produces ATP from ADP in the presence of a proton gradient across the membrane. The chain is A-type ATP synthase subunit E from Methanocella arvoryzae (strain DSM 22066 / NBRC 105507 / MRE50).